Here is a 168-residue protein sequence, read N- to C-terminus: Probable chemoreceptor glutamine deamidase CheD (168 aa).

It belongs to the CheD family.

It catalyses the reaction L-glutaminyl-[protein] + H2O = L-glutamyl-[protein] + NH4(+). Probably deamidates glutamine residues to glutamate on methyl-accepting chemotaxis receptors (MCPs), playing an important role in chemotaxis. The chain is Probable chemoreceptor glutamine deamidase CheD from Pseudomonas syringae pv. tomato (strain ATCC BAA-871 / DC3000).